Here is a 213-residue protein sequence, read N- to C-terminus: dITP/XTP pyrophosphatase (213 aa).

17–22 (SNNAGK) contacts substrate. The active-site Proton acceptor is the D78. A Mg(2+)-binding site is contributed by D78. Substrate is bound by residues S79, 164 to 167 (FGYD), K187, and 192 to 193 (HR).

Belongs to the HAM1 NTPase family. As to quaternary structure, homodimer. The cofactor is Mg(2+).

It catalyses the reaction XTP + H2O = XMP + diphosphate + H(+). The catalysed reaction is dITP + H2O = dIMP + diphosphate + H(+). It carries out the reaction ITP + H2O = IMP + diphosphate + H(+). In terms of biological role, pyrophosphatase that catalyzes the hydrolysis of nucleoside triphosphates to their monophosphate derivatives, with a high preference for the non-canonical purine nucleotides XTP (xanthosine triphosphate), dITP (deoxyinosine triphosphate) and ITP. Seems to function as a house-cleaning enzyme that removes non-canonical purine nucleotides from the nucleotide pool, thus preventing their incorporation into DNA/RNA and avoiding chromosomal lesions. In Bordetella parapertussis (strain 12822 / ATCC BAA-587 / NCTC 13253), this protein is dITP/XTP pyrophosphatase.